A 294-amino-acid polypeptide reads, in one-letter code: Octopine-binding periplasmic protein (294 aa).

The signal sequence occupies residues 1–20 (MRLKSIMCAALFVVAGQAAA). C57 and C64 are oxidised to a cystine.

The protein belongs to the bacterial solute-binding protein 3 family.

The protein localises to the periplasm. Component of the octopine active transport system probably consisting of four subunits: Q, M, P and T. The polypeptide is Octopine-binding periplasmic protein (occT) (Rhizobium meliloti (Ensifer meliloti)).